We begin with the raw amino-acid sequence, 373 residues long: 3 beta-hydroxysteroid dehydrogenase/Delta 5--&gt;4-isomerase type 1 (373 aa).

NADP(+) is bound by residues Gly10–Val15, Tyr155, and Lys159. The Proton donor role is filled by Lys159. A helical transmembrane segment spans residues Leu288–Phe308.

Belongs to the 3-beta-HSD family. In terms of tissue distribution, adrenal glands, kidney, testes and ovaries.

Its subcellular location is the endoplasmic reticulum membrane. It is found in the mitochondrion membrane. The catalysed reaction is a 3beta-hydroxy-Delta(5)-steroid + NAD(+) = a 3-oxo-Delta(5)-steroid + NADH + H(+). It carries out the reaction pregnenolone + NAD(+) = pregn-5-ene-3,20-dione + NADH + H(+). The enzyme catalyses 3beta-hydroxyandrost-5-en-17-one + NAD(+) = androst-5-ene-3,17-dione + NADH + H(+). It catalyses the reaction androst-5-en-3beta,17beta-diol + NAD(+) = 17beta-hydroxy-androst-5-en-3-one + NADH + H(+). The catalysed reaction is a 3beta-hydroxysteroid + NADP(+) = a 3-oxosteroid + NADPH + H(+). It carries out the reaction 5alpha-androstane-3beta,17beta-diol + NADP(+) = 17beta-hydroxy-5alpha-androstan-3-one + NADPH + H(+). The enzyme catalyses 3beta-hydroxy-5alpha-androstan-17-one + NADP(+) = 5alpha-androstan-3,17-dione + NADPH + H(+). It catalyses the reaction a 3-oxo-Delta(5)-steroid = a 3-oxo-Delta(4)-steroid. The catalysed reaction is pregn-5-ene-3,20-dione = progesterone. It carries out the reaction androst-5-ene-3,17-dione = androst-4-ene-3,17-dione. The enzyme catalyses 17beta-hydroxy-androst-5-en-3-one = testosterone. It catalyses the reaction 5alpha-androstane-3beta,17beta-diol + NAD(+) = 17beta-hydroxy-5alpha-androstan-3-one + NADH + H(+). The protein operates within steroid hormone biosynthesis. It participates in steroid metabolism. In terms of biological role, a bifunctional enzyme responsible for the oxidation and isomerization of 3beta-hydroxy-Delta(5)-steroid precursors to 3-oxo-Delta(4)-steroids, an essential step in steroid hormone biosynthesis. Specifically catalyzes the conversion of pregnenolone to progesterone, dehydroepiandrosterone (DHEA) to 4-androstenedione, and androstenediol to testosterone. Additionally, catalyzes the interconversion between 3beta-hydroxy and 3-oxo-5alpha-androstane steroids controlling the bioavalability of the active forms. Specifically converts dihydrotestosterone to its inactive form 5alpha-androstanediol, that does not bind androgen receptor/AR. Also converts androstanedione, a precursor of testosterone and estrone, to epiandrosterone. Expected to use NAD(+) as preferred electron donor for the 3beta-hydroxy-steroid dehydrogenase activity and NADPH for the 3-ketosteroid reductase activity. This chain is 3 beta-hydroxysteroid dehydrogenase/Delta 5--&gt;4-isomerase type 1, found in Rattus norvegicus (Rat).